Reading from the N-terminus, the 411-residue chain is 2,3-bisphosphoglycerate-independent phosphoglycerate mutase (411 aa).

Residues 164 to 190 (VSSNDPKKEGVQPLTIRPGSDDPADAK) form a disordered region.

This sequence belongs to the BPG-independent phosphoglycerate mutase family. A-PGAM subfamily.

It carries out the reaction (2R)-2-phosphoglycerate = (2R)-3-phosphoglycerate. It functions in the pathway carbohydrate degradation; glycolysis; pyruvate from D-glyceraldehyde 3-phosphate: step 3/5. In terms of biological role, catalyzes the interconversion of 2-phosphoglycerate and 3-phosphoglycerate. This is 2,3-bisphosphoglycerate-independent phosphoglycerate mutase from Methanoculleus marisnigri (strain ATCC 35101 / DSM 1498 / JR1).